The chain runs to 130 residues: Methylglyoxal synthase (130 aa).

The region spanning 1–130 is the MGS-like domain; it reads MSTPRIALIA…DLARRLPVKA (130 aa). Substrate is bound by residues His11, Lys15, 37 to 40, and 57 to 58; these read TGTT and SG. The active-site Proton donor/acceptor is Asp63. His90 is a substrate binding site.

It belongs to the methylglyoxal synthase family.

It carries out the reaction dihydroxyacetone phosphate = methylglyoxal + phosphate. Functionally, catalyzes the formation of methylglyoxal from dihydroxyacetone phosphate. The chain is Methylglyoxal synthase from Burkholderia thailandensis (strain ATCC 700388 / DSM 13276 / CCUG 48851 / CIP 106301 / E264).